The following is a 703-amino-acid chain: Ion-translocating oxidoreductase complex subunit C (703 aa).

2 consecutive 4Fe-4S ferredoxin-type domains span residues 369 to 398 (YDPQ…QQMY) and 408 to 437 (KSNQ…IQYF). [4Fe-4S] cluster-binding residues include C378, C381, C384, C388, C417, C420, C423, and C427. Disordered regions lie at residues 467 to 542 (RLER…PDNS) and 555 to 680 (RQQT…PKKA). Residues 485-497 (ARREELAANKGED) show a composition bias toward basic and acidic residues. A compositionally biased stretch (low complexity) spans 559–577 (NGNSPVSSASNSDSATISA). Residues 578-592 (DNTHSTPKTAQNQTA) are compositionally biased toward polar residues. Composition is skewed to low complexity over residues 598-629 (AAVA…TEKT) and 641-669 (AAVA…EKTA).

It belongs to the 4Fe4S bacterial-type ferredoxin family. RnfC subfamily. As to quaternary structure, the complex is composed of six subunits: RnfA, RnfB, RnfC, RnfD, RnfE and RnfG. [4Fe-4S] cluster serves as cofactor.

It localises to the cell inner membrane. Part of a membrane-bound complex that couples electron transfer with translocation of ions across the membrane. This Actinobacillus succinogenes (strain ATCC 55618 / DSM 22257 / CCUG 43843 / 130Z) protein is Ion-translocating oxidoreductase complex subunit C.